The primary structure comprises 224 residues: 7-cyano-7-deazaguanine synthase (224 aa).

Residue 12-22 (LSGGLDSSTVT) coordinates ATP. C193, C201, C204, and C207 together coordinate Zn(2+).

This sequence belongs to the QueC family. It depends on Zn(2+) as a cofactor.

The catalysed reaction is 7-carboxy-7-deazaguanine + NH4(+) + ATP = 7-cyano-7-deazaguanine + ADP + phosphate + H2O + H(+). Its pathway is purine metabolism; 7-cyano-7-deazaguanine biosynthesis. In terms of biological role, catalyzes the ATP-dependent conversion of 7-carboxy-7-deazaguanine (CDG) to 7-cyano-7-deazaguanine (preQ(0)). This chain is 7-cyano-7-deazaguanine synthase, found in Prochlorococcus marinus (strain MIT 9515).